The primary structure comprises 269 residues: 5'-nucleotidase SurE (269 aa).

A divalent metal cation contacts are provided by Asp11, Asp12, Ser43, and Asn101.

It belongs to the SurE nucleotidase family. The cofactor is a divalent metal cation.

It is found in the cytoplasm. The enzyme catalyses a ribonucleoside 5'-phosphate + H2O = a ribonucleoside + phosphate. Its function is as follows. Nucleotidase that shows phosphatase activity on nucleoside 5'-monophosphates. In Prochlorococcus marinus (strain MIT 9211), this protein is 5'-nucleotidase SurE.